Consider the following 100-residue polypeptide: Small ribosomal subunit protein uS14 (100 aa).

The protein belongs to the universal ribosomal protein uS14 family. As to quaternary structure, part of the 30S ribosomal subunit. Contacts proteins S3 and S10.

Binds 16S rRNA, required for the assembly of 30S particles and may also be responsible for determining the conformation of the 16S rRNA at the A site. The polypeptide is Small ribosomal subunit protein uS14 (Picosynechococcus sp. (strain ATCC 27264 / PCC 7002 / PR-6) (Agmenellum quadruplicatum)).